A 317-amino-acid polypeptide reads, in one-letter code: Protoheme IX farnesyltransferase (317 aa).

Transmembrane regions (helical) follow at residues 28–48, 53–73, 101–121, 122–142, 150–170, 178–198, 223–243, 246–266, and 282–302; these read IIPL…HGHI, LLIT…LNCI, LIFA…FVNL, LSAC…THWL, IVIG…AVTG, ILFA…ALMI, IWIY…PFQA, LFYA…AWEL, and YSIL…LPAV.

The protein belongs to the UbiA prenyltransferase family. Protoheme IX farnesyltransferase subfamily.

The protein localises to the cell inner membrane. The catalysed reaction is heme b + (2E,6E)-farnesyl diphosphate + H2O = Fe(II)-heme o + diphosphate. It functions in the pathway porphyrin-containing compound metabolism; heme O biosynthesis; heme O from protoheme: step 1/1. In terms of biological role, converts heme B (protoheme IX) to heme O by substitution of the vinyl group on carbon 2 of heme B porphyrin ring with a hydroxyethyl farnesyl side group. The polypeptide is Protoheme IX farnesyltransferase (Picosynechococcus sp. (strain ATCC 27264 / PCC 7002 / PR-6) (Agmenellum quadruplicatum)).